A 418-amino-acid polypeptide reads, in one-letter code: F-box protein At5g03970 (418 aa).

The region spanning 18–66 is the F-box domain; sequence STHEVLNSNDTMCEILILLPPETIYKLILVSKRWLEIIASPCFRHTYLA.

This Arabidopsis thaliana (Mouse-ear cress) protein is F-box protein At5g03970.